The following is a 130-amino-acid chain: Small ribosomal subunit protein uS9 (130 aa).

Belongs to the universal ribosomal protein uS9 family.

In Aeromonas hydrophila subsp. hydrophila (strain ATCC 7966 / DSM 30187 / BCRC 13018 / CCUG 14551 / JCM 1027 / KCTC 2358 / NCIMB 9240 / NCTC 8049), this protein is Small ribosomal subunit protein uS9.